Consider the following 492-residue polypeptide: Aspartyl/glutamyl-tRNA(Asn/Gln) amidotransferase subunit B (492 aa).

This sequence belongs to the GatB/GatE family. GatB subfamily. In terms of assembly, heterotrimer of A, B and C subunits.

The enzyme catalyses L-glutamyl-tRNA(Gln) + L-glutamine + ATP + H2O = L-glutaminyl-tRNA(Gln) + L-glutamate + ADP + phosphate + H(+). The catalysed reaction is L-aspartyl-tRNA(Asn) + L-glutamine + ATP + H2O = L-asparaginyl-tRNA(Asn) + L-glutamate + ADP + phosphate + 2 H(+). Functionally, allows the formation of correctly charged Asn-tRNA(Asn) or Gln-tRNA(Gln) through the transamidation of misacylated Asp-tRNA(Asn) or Glu-tRNA(Gln) in organisms which lack either or both of asparaginyl-tRNA or glutaminyl-tRNA synthetases. The reaction takes place in the presence of glutamine and ATP through an activated phospho-Asp-tRNA(Asn) or phospho-Glu-tRNA(Gln). This is Aspartyl/glutamyl-tRNA(Asn/Gln) amidotransferase subunit B from Pelagibacter ubique (strain HTCC1062).